Reading from the N-terminus, the 214-residue chain is Leucyl/phenylalanyl-tRNA--protein transferase (214 aa).

Residues 194-214 (FAPPGYSPDPASVVQRSSQTS) are disordered.

It belongs to the L/F-transferase family.

Its subcellular location is the cytoplasm. The enzyme catalyses N-terminal L-lysyl-[protein] + L-leucyl-tRNA(Leu) = N-terminal L-leucyl-L-lysyl-[protein] + tRNA(Leu) + H(+). It carries out the reaction N-terminal L-arginyl-[protein] + L-leucyl-tRNA(Leu) = N-terminal L-leucyl-L-arginyl-[protein] + tRNA(Leu) + H(+). The catalysed reaction is L-phenylalanyl-tRNA(Phe) + an N-terminal L-alpha-aminoacyl-[protein] = an N-terminal L-phenylalanyl-L-alpha-aminoacyl-[protein] + tRNA(Phe). Its function is as follows. Functions in the N-end rule pathway of protein degradation where it conjugates Leu, Phe and, less efficiently, Met from aminoacyl-tRNAs to the N-termini of proteins containing an N-terminal arginine or lysine. The chain is Leucyl/phenylalanyl-tRNA--protein transferase from Cereibacter sphaeroides (strain ATCC 17025 / ATH 2.4.3) (Rhodobacter sphaeroides).